The primary structure comprises 571 residues: Sulfite reductase [NADPH] hemoprotein beta-component (571 aa).

[4Fe-4S] cluster is bound by residues Cys436, Cys442, Cys481, and Cys485. Cys485 serves as a coordination point for siroheme.

The protein belongs to the nitrite and sulfite reductase 4Fe-4S domain family. Alpha(8)-beta(8). The alpha component is a flavoprotein, the beta component is a hemoprotein. Requires siroheme as cofactor. The cofactor is [4Fe-4S] cluster.

It carries out the reaction hydrogen sulfide + 3 NADP(+) + 3 H2O = sulfite + 3 NADPH + 4 H(+). It participates in sulfur metabolism; hydrogen sulfide biosynthesis; hydrogen sulfide from sulfite (NADPH route): step 1/1. Functionally, component of the sulfite reductase complex that catalyzes the 6-electron reduction of sulfite to sulfide. This is one of several activities required for the biosynthesis of L-cysteine from sulfate. This is Sulfite reductase [NADPH] hemoprotein beta-component from Anoxybacillus flavithermus (strain DSM 21510 / WK1).